Here is a 162-residue protein sequence, read N- to C-terminus: Phosphopantetheine adenylyltransferase (162 aa).

S9 is a binding site for substrate. Residues 9 to 10 and H17 each bind ATP; that span reads SF. Residues K41, V77, and K91 each coordinate substrate. Residues 92 to 94, E102, and 126 to 132 contribute to the ATP site; these read GLR and YAFLSSS.

The protein belongs to the bacterial CoaD family. As to quaternary structure, homohexamer. Mg(2+) is required as a cofactor.

The protein resides in the cytoplasm. The catalysed reaction is (R)-4'-phosphopantetheine + ATP + H(+) = 3'-dephospho-CoA + diphosphate. It participates in cofactor biosynthesis; coenzyme A biosynthesis; CoA from (R)-pantothenate: step 4/5. In terms of biological role, reversibly transfers an adenylyl group from ATP to 4'-phosphopantetheine, yielding dephospho-CoA (dPCoA) and pyrophosphate. The chain is Phosphopantetheine adenylyltransferase from Frankia alni (strain DSM 45986 / CECT 9034 / ACN14a).